An 87-amino-acid polypeptide reads, in one-letter code: Small ribosomal subunit protein uS17 (87 aa).

This sequence belongs to the universal ribosomal protein uS17 family. As to quaternary structure, part of the 30S ribosomal subunit.

Its function is as follows. One of the primary rRNA binding proteins, it binds specifically to the 5'-end of 16S ribosomal RNA. The sequence is that of Small ribosomal subunit protein uS17 from Chromobacterium violaceum (strain ATCC 12472 / DSM 30191 / JCM 1249 / CCUG 213 / NBRC 12614 / NCIMB 9131 / NCTC 9757 / MK).